Here is an 876-residue protein sequence, read N- to C-terminus: Alanine--tRNA ligase (876 aa).

An N6-acetyllysine modification is found at K74. Residues H564, H568, C666, and H670 each coordinate Zn(2+).

It belongs to the class-II aminoacyl-tRNA synthetase family. In terms of assembly, homotetramer. Zn(2+) serves as cofactor.

The protein localises to the cytoplasm. The enzyme catalyses tRNA(Ala) + L-alanine + ATP = L-alanyl-tRNA(Ala) + AMP + diphosphate. Catalyzes the attachment of alanine to tRNA(Ala) in a two-step reaction: alanine is first activated by ATP to form Ala-AMP and then transferred to the acceptor end of tRNA(Ala). Also edits incorrectly charged Ser-tRNA(Ala) and Gly-tRNA(Ala) via its editing domain. The chain is Alanine--tRNA ligase from Escherichia coli O1:K1 / APEC.